The chain runs to 286 residues: Bifunctional protein FolD (286 aa).

Residues 164–166, Ser193, and Ile234 each bind NADP(+); that span reads GRS.

This sequence belongs to the tetrahydrofolate dehydrogenase/cyclohydrolase family. In terms of assembly, homodimer.

It catalyses the reaction (6R)-5,10-methylene-5,6,7,8-tetrahydrofolate + NADP(+) = (6R)-5,10-methenyltetrahydrofolate + NADPH. It carries out the reaction (6R)-5,10-methenyltetrahydrofolate + H2O = (6R)-10-formyltetrahydrofolate + H(+). It participates in one-carbon metabolism; tetrahydrofolate interconversion. Catalyzes the oxidation of 5,10-methylenetetrahydrofolate to 5,10-methenyltetrahydrofolate and then the hydrolysis of 5,10-methenyltetrahydrofolate to 10-formyltetrahydrofolate. This is Bifunctional protein FolD from Maridesulfovibrio salexigens (strain ATCC 14822 / DSM 2638 / NCIMB 8403 / VKM B-1763) (Desulfovibrio salexigens).